Reading from the N-terminus, the 398-residue chain is Probable aminomethyltransferase (398 aa).

This sequence belongs to the GcvT family. The glycine cleavage system is composed of four proteins: P, T, L and H.

The catalysed reaction is N(6)-[(R)-S(8)-aminomethyldihydrolipoyl]-L-lysyl-[protein] + (6S)-5,6,7,8-tetrahydrofolate = N(6)-[(R)-dihydrolipoyl]-L-lysyl-[protein] + (6R)-5,10-methylene-5,6,7,8-tetrahydrofolate + NH4(+). In terms of biological role, the glycine cleavage system catalyzes the degradation of glycine. In Thermococcus gammatolerans (strain DSM 15229 / JCM 11827 / EJ3), this protein is Probable aminomethyltransferase.